We begin with the raw amino-acid sequence, 253 residues long: Triosephosphate isomerase (253 aa).

2 residues coordinate substrate: Asn12 and Lys14. His96 serves as the catalytic Electrophile. The Proton acceptor role is filled by Glu169.

Belongs to the triosephosphate isomerase family. Homodimer.

Its subcellular location is the cytoplasm. It catalyses the reaction D-glyceraldehyde 3-phosphate = dihydroxyacetone phosphate. It functions in the pathway carbohydrate biosynthesis; gluconeogenesis. It participates in carbohydrate degradation; glycolysis; D-glyceraldehyde 3-phosphate from glycerone phosphate: step 1/1. In terms of biological role, antigen to the host M.1 monoclonal antibody. The sequence is that of Triosephosphate isomerase (TPI) from Schistosoma mansoni (Blood fluke).